Consider the following 33-residue polypeptide: Photosystem II reaction center protein Psb30 (33 aa).

The helical transmembrane segment at 5-25 (VIAQLTVLALIVISGPLVIAL) threads the bilayer.

It belongs to the Psb30/Ycf12 family. As to quaternary structure, PSII is composed of 1 copy each of membrane proteins PsbA, PsbB, PsbC, PsbD, PsbE, PsbF, PsbH, PsbI, PsbJ, PsbK, PsbL, PsbM, PsbT, PsbX, PsbY, PsbZ, Psb30/Ycf12, peripheral proteins of the oxygen-evolving complex and a large number of cofactors. It forms dimeric complexes.

It localises to the plastid. It is found in the chloroplast thylakoid membrane. A core subunit of photosystem II (PSII), probably helps stabilize the reaction center. The chain is Photosystem II reaction center protein Psb30 from Huperzia lucidula (Shining clubmoss).